Reading from the N-terminus, the 136-residue chain is Cystatin-2 (136 aa).

Residues 1–24 form the signal peptide; that stretch reads MALLRGFLVCSLLLLSCICKEALG. The 96-residue stretch at 29–124 folds into the Cystatin domain; the sequence is GGLENASPEE…CTFEVYNIPW (96 aa). Residues 73 to 77 carry the Secondary area of contact motif; that stretch reads QIVSG. Intrachain disulfides connect C91–C101 and C115–C135.

It belongs to the cystatin family. Expressed by the venom gland.

Its subcellular location is the secreted. In terms of biological role, inhibits various C1 cysteine proteases including cathepsin L, papain and cathepsin B. This protein has no toxic activity and its function in the venom is unknown. It may play a role as housekeeping or regulatory protein. The protein is Cystatin-2 of Crotalus adamanteus (Eastern diamondback rattlesnake).